We begin with the raw amino-acid sequence, 100 residues long: Integration host factor subunit alpha (100 aa).

The protein belongs to the bacterial histone-like protein family. In terms of assembly, heterodimer of an alpha and a beta chain.

Its function is as follows. This protein is one of the two subunits of integration host factor, a specific DNA-binding protein that functions in genetic recombination as well as in transcriptional and translational control. The polypeptide is Integration host factor subunit alpha (Caulobacter vibrioides (strain ATCC 19089 / CIP 103742 / CB 15) (Caulobacter crescentus)).